A 440-amino-acid chain; its full sequence is Trigger factor (440 aa).

Positions 163–248 (GDILTVDFLG…AKALKRRVAP (86 aa)) constitute a PPIase FKBP-type domain.

The protein belongs to the FKBP-type PPIase family. Tig subfamily.

The protein localises to the cytoplasm. It catalyses the reaction [protein]-peptidylproline (omega=180) = [protein]-peptidylproline (omega=0). In terms of biological role, involved in protein export. Acts as a chaperone by maintaining the newly synthesized protein in an open conformation. Functions as a peptidyl-prolyl cis-trans isomerase. The protein is Trigger factor of Acidiphilium cryptum (strain JF-5).